The following is a 1838-amino-acid chain: Type III effector DspE (1838 aa).

Basic and acidic residues predominate over residues 1-12 (MELKSLGTEHKA). Disordered regions lie at residues 1-72 (MELK…AAHQ), 86-163 (KKFS…PTQQ), 182-264 (MAHP…VATP), 281-300 (LEGTDTTQSPLKPQSMLKGS), 398-418 (DGKSGKISLGSGTQSHNKTML), and 1480-1505 (NLAAGSRERSTTSGQFGSTTSASNNR). Positions 27–46 (ALQQGSSSSSPQNAAASLAA) are enriched in low complexity. Residues 91–103 (SAPQGQPGTTHSK) are compositionally biased toward polar residues. Residues 110–120 (LLARDDGETQH) show a composition bias toward basic and acidic residues. The segment covering 407-418 (GSGTQSHNKTML) has biased composition (polar residues). Residues 1480-1502 (NLAAGSRERSTTSGQFGSTTSAS) are compositionally biased toward low complexity.

It belongs to the AvrE family. Interacts with the chaperone DspF (DspB/F).

The protein localises to the secreted. Its subcellular location is the host cell. With respect to regulation, polyamidoamine dendrimers inhibit channel and virulence activities. In terms of biological role, major virulence factor that may function as a water- and solute-permeable channel dedicated to creating osmotic/water potential perturbation and a water- and nutrient-rich apoplast in which bacteria multiply within the infected plant tissues. Expression in Xenopus oocytes results in inward and outward currents, permeability to water and osmolarity-dependent oocyte swelling and bursting. Functionally, acts as a major cell-death inducer during fire blight, a necrotic disease affecting plants of the rosaceous family, and during hypersensitive response (HR) on non-host plants. Essential for pathogenicity on host plants. Contributes quantitatively and in a strain-dependent fashion to HR elicitation in non-host plants such as tobacco. Induces cell death in leaves of apple, a host plant, and tobacco, a non-host plant. Also triggers necrosis in the widely used model, non-host, N.benthamiana and in yeast. Required for the transient multiplication and survival of E.amylovora in non-host A.thaliana leaves. In A.thaliana, triggers electrolyte leakage, activation of defense pathways, reactive oxygen species (ROS) accumulation and cell death. The toxicity of DspE in A.thaliana is associated with an early repression of de novo protein synthesis. In Erwinia amylovora (Fire blight bacteria), this protein is Type III effector DspE.